A 146-amino-acid chain; its full sequence is Bradykinin-like neuropeptide (146 aa).

The signal sequence occupies residues 1–24 (MTSSIYGFITLSVVALISQTTCRS). 2 consecutive propeptides follow at residues 25–80 (LDLL…LMEA) and 92–146 (LRSY…FRYG).

In terms of tissue distribution, neuron L5.

Its subcellular location is the secreted. Its function is as follows. May have important functions in renal physiology and in animal behavior, as does bradykinin. The chain is Bradykinin-like neuropeptide (LUQ-1) from Aplysia californica (California sea hare).